The chain runs to 259 residues: uncharacterized protein (259 aa).

The N-terminal stretch at 1-28 (MNIKRRLKYLTSCLLVSAFFWINSSAWA) is a signal peptide. 2 helical membrane-spanning segments follow: residues 32-52 (EIPP…IYVA) and 191-211 (WGFL…GIFT).

The protein localises to the cell membrane. This is an uncharacterized protein from Coxiella burnetii (strain RSA 493 / Nine Mile phase I).